We begin with the raw amino-acid sequence, 247 residues long: Mycofactocin precursor peptide peptidase (247 aa).

Positions 38, 40, 49, 124, and 163 each coordinate a divalent metal cation.

This sequence belongs to the creatininase superfamily. Homooctamer. It depends on Fe(2+) as a cofactor. Zn(2+) serves as cofactor.

It catalyses the reaction [mycofactocin precursor peptide]-C-terminal glycyl-N-{5-[(4-hydroxyphenyl)methyl]-4,4-dimethyl-2-oxopyrrolidin-3-yl}acetamide + H2O = [mycofactocin precursor peptide]-C-terminal glycine + 3-amino-5-[(4-hydroxyphenyl)methyl]-4,4-dimethyl-2-pyrrolidin-2-one. Peptidase involved in the biosynthesis of the enzyme cofactor mycofactocin (MFT). Catalyzes cleavage of the MftC-modified MftA peptide to liberate its final two residues, which consist of a cross-linked valine-decarboxylated tyrosine dipeptide (named 3-amino-5-[(4-hydroxyphenyl)methyl]-4,4-dimethyl-2-pyrrolidin-2-one or ADHP). Is required for the in vivo ethanol assimilation in M.smegmatis. This is Mycofactocin precursor peptide peptidase from Mycolicibacterium smegmatis (strain ATCC 700084 / mc(2)155) (Mycobacterium smegmatis).